Consider the following 205-residue polypeptide: Recombination protein RecR (205 aa).

The segment at 58 to 75 (CSLCQNVTDKEIDPCNIC) adopts a C4-type zinc-finger fold. The region spanning 83–182 (RVVCVVEAPN…KVTRIARGIP (100 aa)) is the Toprim domain.

Belongs to the RecR family.

In terms of biological role, may play a role in DNA repair. It seems to be involved in an RecBC-independent recombinational process of DNA repair. It may act with RecF and RecO. In Chloroherpeton thalassium (strain ATCC 35110 / GB-78), this protein is Recombination protein RecR.